We begin with the raw amino-acid sequence, 55 residues long: Large ribosomal subunit protein bL32c (55 aa).

Belongs to the bacterial ribosomal protein bL32 family.

Its subcellular location is the plastid. The protein resides in the chloroplast. This Daucus carota (Wild carrot) protein is Large ribosomal subunit protein bL32c.